Here is a 459-residue protein sequence, read N- to C-terminus: Probable 1,4-beta-D-glucan cellobiohydrolase C (459 aa).

Positions 1–18 (MHYPLSLALAFLPFGIQA) are cleaved as a signal peptide. A CBM1 domain is found at 19-54 (QQTLWGQCGGQGYSGATSCVAGATCATVNEYYAQCT). Intrachain disulfides connect Cys-26/Cys-43 and Cys-37/Cys-53. Positions 54–94 (TPAAGTSSATTLKTTTSSTTAAVTTTTTTQSPTGSASPTTT) are thr-rich linker. A disordered region spans residues 76 to 97 (VTTTTTTQSPTGSASPTTTASA). Residues 95-459 (ASASGNPFSG…QLLTNANPAF (365 aa)) are catalytic. The active site involves Asp-189. Cys-190 and Cys-249 are disulfide-bonded. The active-site Proton donor is Asp-235. Asn-303 carries an N-linked (GlcNAc...) asparagine glycan. Residues Cys-381 and Cys-428 are joined by a disulfide bond. Residue Asp-414 is the Nucleophile of the active site.

The protein belongs to the glycosyl hydrolase 6 (cellulase B) family.

The protein resides in the secreted. The enzyme catalyses Hydrolysis of (1-&gt;4)-beta-D-glucosidic linkages in cellulose and cellotetraose, releasing cellobiose from the non-reducing ends of the chains.. Functionally, the biological conversion of cellulose to glucose generally requires three types of hydrolytic enzymes: (1) Endoglucanases which cut internal beta-1,4-glucosidic bonds; (2) Exocellobiohydrolases that cut the disaccharide cellobiose from the non-reducing end of the cellulose polymer chain; (3) Beta-1,4-glucosidases which hydrolyze the cellobiose and other short cello-oligosaccharides to glucose. The chain is Probable 1,4-beta-D-glucan cellobiohydrolase C (cbhC) from Aspergillus niger (strain ATCC MYA-4892 / CBS 513.88 / FGSC A1513).